We begin with the raw amino-acid sequence, 230 residues long: D-glycero-alpha-D-manno-heptose 1-phosphate guanylyltransferase (230 aa).

Belongs to the D-alpha-D-heptose-1-P guanylyltransferase family.

The enzyme catalyses D-glycero-alpha-D-manno-heptose 1-phosphate + GTP + H(+) = GDP-D-glycero-alpha-D-manno-heptose + diphosphate. The protein operates within nucleotide-sugar biosynthesis; GDP-D-glycero-alpha-D-manno-heptose biosynthesis; GDP-D-glycero-alpha-D-manno-heptose from D-glycero-alpha-D-manno-heptose 7-phosphate: step 3/3. It participates in cell surface structure biogenesis; S-layer biogenesis. In terms of biological role, catalyzes the GDP transfer from GTP to D-glycero-alpha-D-manno-heptose 1-phosphate, yielding GDP-D-alpha-D-heptose. Cannot use ATP, CTP, dTTP or UTP as substrate. The protein is D-glycero-alpha-D-manno-heptose 1-phosphate guanylyltransferase (hddC) of Aneurinibacillus thermoaerophilus.